Here is a 1441-residue protein sequence, read N- to C-terminus: MWLTSYVLPRLKNILLLQFHITLPLNYLVLLLLSTVIITYLFLRTRILSNYSQLKDDVSDENNINRKDYMDASSASFLLNREKHKGFTSYLDEFLSAIKIFGYLEKPVFHELTKSMKTEKLQEGEIVLLDDSVGFTIVVEGTLEILHKMDNRHSNPSGDAAANATAFEPPSNDDGYLINGEKFQLLNIVKTGNPLSSLVSIMKLFSNRSTHLNEGTHPSTTNNTPGPGSPNLTGEINSFLDSTLPAKFGSADSANGNHPISPMELESTFDNLSEASENDRSAKIPDIIARAASDCTIAIIPSSSFQRLLVKYPRSASHIIQMILTKLYRVTFKTAHTYLGLTNEIIFTEFQSINKDNLKLPEYFRRSIISYFTNRQDDTGSSASTIQKRPQLHRRDSNNSLNYGSRHVVLNSRDQYNPGDLLSNVPLPRLNPQQRNDLSNTNSSSTLSRADYRPIILNNFSSSQFEETEVSSWRLALVEIIFQQLGITKDTIEPPISDDFSLHDHSLDEKGLVRRSSYSSFTSLSSSIATHSSNHLVTFLPRESQQFSRLNRTGGKMASHSKRLNGSSRSNSRTDRSESFDHFRNENLGGDNQFSDFESVKEDFSKCIKILKFEEGETILCQNSNPQGIYYLVSGEVDVISETKDGNTDESYERTLYTATEGYILGYLSSILGCKSLVTLKVSKGPAYLGLIPYNDLERLCDKYFMIYLKLSEILTNSLSPNLLRLDYFLEWIQLDSSETLFNQGDPANGVYLVLNGRLRQLFYEDADSDIVTQMAELSKGESFGEVEVLTAIHRLNTVVAIRDTELARIPRTLFEFLAVEHPSIMIHVSRMVAKKAMLMNFKSGIGFSGSQPITKLIGDETAMQKRYDFNLNIKSNKSSKKNELISNTVNYKTLTLLPITEGLPVEEFAYKLINALRQCGKTTIGLNQRTTLSHLGRHAFNKLSKLKQSGYFAELEELYEIVVYIADTPVSSSWTQTCISQGDCILLLADATCDPKIGEFERLLLKSKTTARTDLILLHPERYVVPGSTSKWLKNRMWIQSHHHIQFTPMEKVAEPDPIPNIKPLSQLVEKFKENTKKTQENFVKFLPDSIKTTVETLSGKYIDPKPNPKFYTSVDPIKNDFLRLARTLSGQAVGLVLGGGGARGLSHLGIIKALEEQGIPIDIIGGTSIGSFVGGLYAMDYDLVPIYGRVKKFAGRVGSLWRMLSDLTWPVTSYTTGHEFNRGIWKSFRDYRIEDFWISYYCNSTNITESVQEIHSSGFAWRYIRASMSLAGLLPPIVDNGNMLLDGGYVDNLPVTEMTQRGCKIVFAVDVGSVDDRTPMSYGDSLNGFWIVLNRWNPFSKHPNIPNMAEIQMRLGYVASVNALERAKSTPGVVYIRPPIENYATLDFGKFEEIYQVGYAYGHDFLQHLQEKNELPPIAGTTTSAYADKENMLQRRNSI.

Topologically, residues 1–22 (MWLTSYVLPRLKNILLLQFHIT) are lumenal. Residues 23 to 43 (LPLNYLVLLLLSTVIITYLFL) traverse the membrane as a helical segment. The Cytoplasmic segment spans residues 44–1441 (RTRILSNYSQ…ENMLQRRNSI (1398 aa)). Disordered regions lie at residues 154–173 (SNPS…PSND), 210–236 (THLN…TGEI), 376–445 (QDDT…NSSS), and 551–585 (NRTG…HFRN). Positions 376–388 (QDDTGSSASTIQK) are enriched in polar residues. Basic and acidic residues predominate over residues 572-585 (SRTDRSESFDHFRN). Residues 592-718 (NQFS…LTNS) and 707-836 (IYLK…VAKK) contribute to the a nucleoside 3',5'-cyclic phosphate site. Residues 1137 to 1301 (LVLGGGGARG…VDNLPVTEMT (165 aa)) enclose the PNPLA domain. Positions 1141–1146 (GGGARG) match the GXGXXG motif. Residues 1168 to 1172 (GTSIG) carry the GXSXG motif. The active-site Nucleophile is S1170. The Proton acceptor role is filled by D1288. The DGA/G signature appears at 1288–1290 (DGG).

The protein belongs to the NTE family.

The protein resides in the endoplasmic reticulum membrane. The catalysed reaction is a 1-acyl-sn-glycero-3-phosphocholine + H2O = sn-glycerol 3-phosphocholine + a fatty acid + H(+). With respect to regulation, inhibited by organophosphorus esters. Intracellular phospholipase B that catalyzes the double deacylation of phosphatidylcholine (PC) to glycerophosphocholine (GroPCho). Plays an important role in membrane lipid homeostasis. Responsible for the rapid PC turnover in response to inositol, elevated temperatures, or when choline is present in the growth medium. The sequence is that of Lysophospholipase NTE1 (NTE1) from Kluyveromyces lactis (strain ATCC 8585 / CBS 2359 / DSM 70799 / NBRC 1267 / NRRL Y-1140 / WM37) (Yeast).